The primary structure comprises 475 residues: Protein nucleotidyltransferase YdiU (475 aa).

Positions 82, 84, 85, 105, 117, 118, 168, and 175 each coordinate ATP. D240 serves as the catalytic Proton acceptor. Mg(2+) is bound by residues N241 and D250. D250 contributes to the ATP binding site.

This sequence belongs to the SELO family. The cofactor is Mg(2+). Requires Mn(2+) as cofactor.

The catalysed reaction is L-seryl-[protein] + ATP = 3-O-(5'-adenylyl)-L-seryl-[protein] + diphosphate. The enzyme catalyses L-threonyl-[protein] + ATP = 3-O-(5'-adenylyl)-L-threonyl-[protein] + diphosphate. It catalyses the reaction L-tyrosyl-[protein] + ATP = O-(5'-adenylyl)-L-tyrosyl-[protein] + diphosphate. It carries out the reaction L-histidyl-[protein] + UTP = N(tele)-(5'-uridylyl)-L-histidyl-[protein] + diphosphate. The catalysed reaction is L-seryl-[protein] + UTP = O-(5'-uridylyl)-L-seryl-[protein] + diphosphate. The enzyme catalyses L-tyrosyl-[protein] + UTP = O-(5'-uridylyl)-L-tyrosyl-[protein] + diphosphate. Its function is as follows. Nucleotidyltransferase involved in the post-translational modification of proteins. It can catalyze the addition of adenosine monophosphate (AMP) or uridine monophosphate (UMP) to a protein, resulting in modifications known as AMPylation and UMPylation. The protein is Protein nucleotidyltransferase YdiU of Aeromonas salmonicida (strain A449).